The sequence spans 145 residues: D-aminoacyl-tRNA deacylase (145 aa).

The Gly-cisPro motif, important for rejection of L-amino acids signature appears at 137-138 (GP).

Belongs to the DTD family. As to quaternary structure, homodimer.

Its subcellular location is the cytoplasm. The catalysed reaction is glycyl-tRNA(Ala) + H2O = tRNA(Ala) + glycine + H(+). It catalyses the reaction a D-aminoacyl-tRNA + H2O = a tRNA + a D-alpha-amino acid + H(+). In terms of biological role, an aminoacyl-tRNA editing enzyme that deacylates mischarged D-aminoacyl-tRNAs. Also deacylates mischarged glycyl-tRNA(Ala), protecting cells against glycine mischarging by AlaRS. Acts via tRNA-based rather than protein-based catalysis; rejects L-amino acids rather than detecting D-amino acids in the active site. By recycling D-aminoacyl-tRNA to D-amino acids and free tRNA molecules, this enzyme counteracts the toxicity associated with the formation of D-aminoacyl-tRNA entities in vivo and helps enforce protein L-homochirality. The chain is D-aminoacyl-tRNA deacylase from Enterobacter sp. (strain 638).